A 332-amino-acid chain; its full sequence is GLIPR1-like protein 2 (332 aa).

The region spanning 57–191 is the SCP domain; sequence LHNELRGTVF…THAALFICNY (135 aa). N-linked (GlcNAc...) asparagine glycosylation occurs at asparagine 145. A helical membrane pass occupies residues 253–273; sequence IFILFLRVASLLLCVIVVLIV. A disordered region spans residues 293–332; the sequence is EGKTEVEIVMEEGEGEGEGGEGEGEGEEKEEEEMLEEDEQ. Over residues 300–332 the composition is skewed to acidic residues; that stretch reads IVMEEGEGEGEGGEGEGEGEEKEEEEMLEEDEQ.

Belongs to the CRISP family.

It localises to the membrane. The protein is GLIPR1-like protein 2 (Glipr1l2) of Mus musculus (Mouse).